The sequence spans 263 residues: Acyl-[acyl-carrier-protein]--UDP-N-acetylglucosamine O-acyltransferase (263 aa).

This sequence belongs to the transferase hexapeptide repeat family. LpxA subfamily. As to quaternary structure, homotrimer.

It localises to the cytoplasm. The enzyme catalyses a (3R)-hydroxyacyl-[ACP] + UDP-N-acetyl-alpha-D-glucosamine = a UDP-3-O-[(3R)-3-hydroxyacyl]-N-acetyl-alpha-D-glucosamine + holo-[ACP]. Its pathway is glycolipid biosynthesis; lipid IV(A) biosynthesis; lipid IV(A) from (3R)-3-hydroxytetradecanoyl-[acyl-carrier-protein] and UDP-N-acetyl-alpha-D-glucosamine: step 1/6. In terms of biological role, involved in the biosynthesis of lipid A, a phosphorylated glycolipid that anchors the lipopolysaccharide to the outer membrane of the cell. This Xylella fastidiosa (strain Temecula1 / ATCC 700964) protein is Acyl-[acyl-carrier-protein]--UDP-N-acetylglucosamine O-acyltransferase.